Consider the following 383-residue polypeptide: Deoxyguanosinetriphosphate triphosphohydrolase-like protein (383 aa).

One can recognise an HD domain in the interval 62–198 (RLTHSLEVST…AALADDISYI (137 aa)).

The protein belongs to the dGTPase family. Type 2 subfamily.

The chain is Deoxyguanosinetriphosphate triphosphohydrolase-like protein from Rickettsia bellii (strain RML369-C).